Here is a 213-residue protein sequence, read N- to C-terminus: MADNKPYKSYFLDPLWNNNQPLIAILGICSALAVTTTVKTAITMGLAVSFVTGCSSFFVSLLRKITPDSVRMITQLIIISLFVIVIDQFLKAFFFNISKTLSVFVGLIITNCIVMGRAESLARNVPPIPAFLDGLASGLGYGWVLVFVSIIREFFGFGTLLGLQLIPKCFYASEAHPDGYENFGLMVLAPSAFFLLGIMIWVVNILRSKKAKR.

Transmembrane regions (helical) follow at residues 21-41, 42-62, 77-97, 101-121, 131-151, and 183-203; these read PLIA…VKTA, ITMG…VSLL, IIIS…FFNI, LSVF…AESL, FLDG…VSII, and FGLM…IWVV.

Belongs to the NqrDE/RnfAE family. As to quaternary structure, composed of six subunits; NqrA, NqrB, NqrC, NqrD, NqrE and NqrF.

It localises to the cell inner membrane. It carries out the reaction a ubiquinone + n Na(+)(in) + NADH + H(+) = a ubiquinol + n Na(+)(out) + NAD(+). Its function is as follows. NQR complex catalyzes the reduction of ubiquinone-1 to ubiquinol by two successive reactions, coupled with the transport of Na(+) ions from the cytoplasm to the periplasm. NqrA to NqrE are probably involved in the second step, the conversion of ubisemiquinone to ubiquinol. The protein is Na(+)-translocating NADH-quinone reductase subunit D of Chlamydia felis (strain Fe/C-56) (Chlamydophila felis).